The following is a 452-amino-acid chain: Netrin-5 (452 aa).

Residues 1–34 (MTDYRTLFSSPGAGSTVTTPITLSLLLLLSQATS) form the signal peptide. 11 disulfides stabilise this stretch: Cys-173–Cys-182, Cys-175–Cys-191, Cys-193–Cys-202, Cys-205–Cys-225, Cys-228–Cys-240, Cys-230–Cys-247, Cys-249–Cys-258, Cys-261–Cys-275, Cys-298–Cys-376, Cys-302–Cys-378, and Cys-317–Cys-438. Laminin EGF-like domains follow at residues 173-227 (CQCH…PCLP) and 228-277 (CQCH…PCQR). The NTR domain maps to 298 to 438 (CQGYCNVSVS…LQQKERGGAC (141 aa)). Asn-303 carries an N-linked (GlcNAc...) asparagine glycan.

Its subcellular location is the secreted. Functionally, plays a role in neurogenesis. Prevents motor neuron cell body migration out of the neural tube. The protein is Netrin-5 (Ntn5) of Mus musculus (Mouse).